A 327-amino-acid polypeptide reads, in one-letter code: D-alanine--D-alanine ligase (327 aa).

In terms of domain architecture, ATP-grasp spans 113–312; that stretch reads KRLWMTHDLS…YEDFVMQVVA (200 aa). An ATP-binding site is contributed by 139–194; it reads VADLGLPLIVKPAREGSSIGLSKVTDASQMREAFEKAAALDNDVIAETFIDGAELT. 3 residues coordinate Mg(2+): Asp-266, Glu-279, and Asn-281.

This sequence belongs to the D-alanine--D-alanine ligase family. It depends on Mg(2+) as a cofactor. Mn(2+) is required as a cofactor.

The protein localises to the cytoplasm. It carries out the reaction 2 D-alanine + ATP = D-alanyl-D-alanine + ADP + phosphate + H(+). It functions in the pathway cell wall biogenesis; peptidoglycan biosynthesis. Its function is as follows. Cell wall formation. The protein is D-alanine--D-alanine ligase of Cupriavidus pinatubonensis (strain JMP 134 / LMG 1197) (Cupriavidus necator (strain JMP 134)).